Reading from the N-terminus, the 577-residue chain is Arginine--tRNA ligase (577 aa).

Positions P122–H132 match the 'HIGH' region motif.

The protein belongs to the class-I aminoacyl-tRNA synthetase family. In terms of assembly, monomer.

The protein localises to the cytoplasm. It carries out the reaction tRNA(Arg) + L-arginine + ATP = L-arginyl-tRNA(Arg) + AMP + diphosphate. This chain is Arginine--tRNA ligase, found in Salmonella agona (strain SL483).